An 897-amino-acid chain; its full sequence is Beta-galactosidase (897 aa).

E459 acts as the Proton donor in catalysis. E525 (nucleophile) is an active-site residue.

Belongs to the glycosyl hydrolase 2 family.

It carries out the reaction Hydrolysis of terminal non-reducing beta-D-galactose residues in beta-D-galactosides.. This is Beta-galactosidase (cbgA) from Clostridium acetobutylicum.